The primary structure comprises 200 residues: Small ribosomal subunit protein mS26 (200 aa).

Residues 1 to 27 (MLRALNRLAARPGGQPPTLLLLPVRGR) constitute a mitochondrion transit peptide. N6-acetyllysine is present on K159.

The protein belongs to the mitochondrion-specific ribosomal protein mS26 family. In terms of assembly, component of the mitochondrial ribosome small subunit (28S) which comprises a 12S rRNA and about 30 distinct proteins.

It localises to the mitochondrion. This is Small ribosomal subunit protein mS26 (Mrps26) from Rattus norvegicus (Rat).